The chain runs to 420 residues: Glucose-1-phosphate adenylyltransferase (420 aa).

Alpha-D-glucose 1-phosphate-binding positions include Tyr-107, Gly-172, 187 to 188 (EK), and Ser-205.

This sequence belongs to the bacterial/plant glucose-1-phosphate adenylyltransferase family. In terms of assembly, homotetramer.

It catalyses the reaction alpha-D-glucose 1-phosphate + ATP + H(+) = ADP-alpha-D-glucose + diphosphate. Its pathway is glycan biosynthesis; glycogen biosynthesis. Functionally, involved in the biosynthesis of ADP-glucose, a building block required for the elongation reactions to produce glycogen. Catalyzes the reaction between ATP and alpha-D-glucose 1-phosphate (G1P) to produce pyrophosphate and ADP-Glc. This is Glucose-1-phosphate adenylyltransferase from Rhodopseudomonas palustris (strain BisB18).